The primary structure comprises 631 residues: Phosphomethylpyrimidine synthase (631 aa).

Substrate contacts are provided by residues asparagine 239, methionine 268, tyrosine 297, histidine 333, 353 to 355, 394 to 397, and glutamate 433; these read SRG and DGLR. Histidine 437 contacts Zn(2+). Residue tyrosine 460 participates in substrate binding. Histidine 501 provides a ligand contact to Zn(2+). [4Fe-4S] cluster is bound by residues cysteine 581, cysteine 584, and cysteine 589.

Belongs to the ThiC family. As to quaternary structure, homodimer. [4Fe-4S] cluster is required as a cofactor.

It carries out the reaction 5-amino-1-(5-phospho-beta-D-ribosyl)imidazole + S-adenosyl-L-methionine = 4-amino-2-methyl-5-(phosphooxymethyl)pyrimidine + CO + 5'-deoxyadenosine + formate + L-methionine + 3 H(+). It functions in the pathway cofactor biosynthesis; thiamine diphosphate biosynthesis. In terms of biological role, catalyzes the synthesis of the hydroxymethylpyrimidine phosphate (HMP-P) moiety of thiamine from aminoimidazole ribotide (AIR) in a radical S-adenosyl-L-methionine (SAM)-dependent reaction. The sequence is that of Phosphomethylpyrimidine synthase from Salmonella paratyphi B (strain ATCC BAA-1250 / SPB7).